The sequence spans 507 residues: Xylose import ATP-binding protein XylG (507 aa).

ABC transporter domains lie at 5–242 (LKMT…VGRE) and 259–504 (LEVK…LSEK). ATP is bound at residue 37–44 (GENGSGKS).

It belongs to the ABC transporter superfamily. Xylose importer (TC 3.A.1.2.4) family. The complex is composed of two ATP-binding proteins (XylG), two transmembrane proteins (XylH) and a solute-binding protein (XylF).

The protein resides in the cell inner membrane. The enzyme catalyses D-xylose(out) + ATP + H2O = D-xylose(in) + ADP + phosphate + H(+). In terms of biological role, part of the ABC transporter complex XylFGH involved in xylose import. Responsible for energy coupling to the transport system. The sequence is that of Xylose import ATP-binding protein XylG from Photobacterium profundum (strain SS9).